A 301-amino-acid polypeptide reads, in one-letter code: Glycine--tRNA ligase alpha subunit (301 aa).

The protein belongs to the class-II aminoacyl-tRNA synthetase family. As to quaternary structure, tetramer of two alpha and two beta subunits.

It localises to the cytoplasm. It catalyses the reaction tRNA(Gly) + glycine + ATP = glycyl-tRNA(Gly) + AMP + diphosphate. This chain is Glycine--tRNA ligase alpha subunit, found in Shewanella oneidensis (strain ATCC 700550 / JCM 31522 / CIP 106686 / LMG 19005 / NCIMB 14063 / MR-1).